A 412-amino-acid polypeptide reads, in one-letter code: Short-chain specific acyl-CoA dehydrogenase, mitochondrial (412 aa).

A mitochondrion-targeting transit peptide spans 1–24; sequence MAATLLARACGLVRGAPWPWGWRR. Threonine 27 bears the Phosphothreonine mark. N6-acetyllysine; alternate is present on lysine 51. Lysine 51 carries the post-translational modification N6-succinyllysine; alternate. An N6-acetyllysine modification is found at lysine 72. Lysine 129 is subject to N6-acetyllysine; alternate. Position 129 is an N6-succinyllysine; alternate (lysine 129). FAD is bound by residues 152–161 and 185–187; these read FALSEPGNGS and WIT. Serine 161 serves as a coordination point for substrate. Position 208 is an N6-acetyllysine (lysine 208). Residue lysine 262 is modified to N6-acetyllysine; alternate. N6-succinyllysine; alternate is present on lysine 262. 269–272 serves as a coordination point for substrate; the sequence is DTGR. Arginine 297 contacts FAD. Lysine 306 bears the N6-acetyllysine; alternate mark. The residue at position 306 (lysine 306) is an N6-succinyllysine; alternate. FAD-binding positions include glutamine 308 and 365–369; that span reads QILGG. Glutamate 392 acts as the Proton acceptor in catalysis. Glycine 393 contacts substrate. Residue 394–396 coordinates FAD; sequence TSE.

It belongs to the acyl-CoA dehydrogenase family. As to quaternary structure, homotetramer. Requires FAD as cofactor.

Its subcellular location is the mitochondrion matrix. It catalyses the reaction a short-chain 2,3-saturated fatty acyl-CoA + oxidized [electron-transfer flavoprotein] + H(+) = a short-chain (2E)-enoyl-CoA + reduced [electron-transfer flavoprotein]. The enzyme catalyses butanoyl-CoA + oxidized [electron-transfer flavoprotein] + H(+) = (2E)-butenoyl-CoA + reduced [electron-transfer flavoprotein]. The catalysed reaction is pentanoyl-CoA + oxidized [electron-transfer flavoprotein] + H(+) = (2E)-pentenoyl-CoA + reduced [electron-transfer flavoprotein]. It carries out the reaction hexanoyl-CoA + oxidized [electron-transfer flavoprotein] + H(+) = (2E)-hexenoyl-CoA + reduced [electron-transfer flavoprotein]. The protein operates within lipid metabolism; mitochondrial fatty acid beta-oxidation. In terms of biological role, short-chain specific acyl-CoA dehydrogenase is one of the acyl-CoA dehydrogenases that catalyze the first step of mitochondrial fatty acid beta-oxidation, an aerobic process breaking down fatty acids into acetyl-CoA and allowing the production of energy from fats. The first step of fatty acid beta-oxidation consists in the removal of one hydrogen from C-2 and C-3 of the straight-chain fatty acyl-CoA thioester, resulting in the formation of trans-2-enoyl-CoA. Among the different mitochondrial acyl-CoA dehydrogenases, short-chain specific acyl-CoA dehydrogenase acts specifically on acyl-CoAs with saturated 4 to 6 carbons long primary chains. The polypeptide is Short-chain specific acyl-CoA dehydrogenase, mitochondrial (ACADS) (Bos taurus (Bovine)).